We begin with the raw amino-acid sequence, 597 residues long: Probable tyrosine-protein phosphatase (597 aa).

Low complexity predominate over residues 55–81 (VSSSSDAAPTSISTTTTSTTSMTDASA). Disordered regions lie at residues 55–89 (VSSS…QQVY), 107–172 (SFSI…PNSL), and 188–228 (STNG…GNNN). The segment covering 107-126 (SFSIQPNQTPTMLPTSSYTL) has biased composition (polar residues). A compositionally biased stretch (low complexity) spans 136–151 (TSSISSISSTSSNSTS). Polar residues-rich tracts occupy residues 188 to 206 (STNG…NQPR) and 216 to 228 (KKST…GNNN). The region spanning 428–579 (GPKNVLNNLI…LMEFGDKLNN (152 aa)) is the Tyrosine-protein phosphatase domain. The Phosphocysteine intermediate role is filled by Cys-516.

Belongs to the protein-tyrosine phosphatase family. Non-receptor class dual specificity subfamily.

It carries out the reaction O-phospho-L-tyrosyl-[protein] + H2O = L-tyrosyl-[protein] + phosphate. This Candida albicans (strain WO-1) (Yeast) protein is Probable tyrosine-protein phosphatase (CPP1).